The chain runs to 177 residues: VQ motif-containing protein 11 (177 aa).

Positions 25 to 34 match the VQ motif; sequence FRNIVQKLTG. 5 positions are modified to phosphoserine: Ser43, Ser99, Ser115, Ser142, and Ser145. The segment covering 115–133 has biased composition (basic and acidic residues); the sequence is SAREEHHAQPDKEEQKAIA. A disordered region spans residues 115 to 177; sequence SAREEHHAQP…RIHEDNHRDS (63 aa). Residues 148–159 are compositionally biased toward low complexity; the sequence is EPAPELLPLFPL. Ser161 bears the Phosphoserine mark. Over residues 168-177 the composition is skewed to basic and acidic residues; sequence RIHEDNHRDS.

In terms of processing, phosphorylated on serine residues by MPK6.

It localises to the nucleus. Its function is as follows. May modulate WRKY transcription factor activities. In Arabidopsis thaliana (Mouse-ear cress), this protein is VQ motif-containing protein 11.